Here is a 353-residue protein sequence, read N- to C-terminus: Photosystem II protein D1 (353 aa).

An N-acetylthreonine modification is found at threonine 2. Residue threonine 2 is modified to Phosphothreonine. Transmembrane regions (helical) follow at residues tyrosine 29–serine 46, histidine 118–leucine 133, and tryptophan 142–alanine 156. Histidine 118 serves as a coordination point for chlorophyll a. Position 126 (tyrosine 126) interacts with pheophytin a. Residues aspartate 170 and glutamate 189 each coordinate [CaMn4O5] cluster. The helical transmembrane segment at phenylalanine 197–leucine 218 threads the bilayer. Residue histidine 198 coordinates chlorophyll a. A quinone is bound by residues histidine 215 and serine 264–phenylalanine 265. Histidine 215 provides a ligand contact to Fe cation. Histidine 272 is a Fe cation binding site. A helical membrane pass occupies residues phenylalanine 274–leucine 288. 4 residues coordinate [CaMn4O5] cluster: histidine 332, glutamate 333, aspartate 342, and alanine 344. Residues alanine 345–glycine 353 constitute a propeptide that is removed on maturation.

It belongs to the reaction center PufL/M/PsbA/D family. In terms of assembly, PSII is composed of 1 copy each of membrane proteins PsbA, PsbB, PsbC, PsbD, PsbE, PsbF, PsbH, PsbI, PsbJ, PsbK, PsbL, PsbM, PsbT, PsbX, PsbY, PsbZ, Psb30/Ycf12, at least 3 peripheral proteins of the oxygen-evolving complex and a large number of cofactors. It forms dimeric complexes. It depends on The D1/D2 heterodimer binds P680, chlorophylls that are the primary electron donor of PSII, and subsequent electron acceptors. It shares a non-heme iron and each subunit binds pheophytin, quinone, additional chlorophylls, carotenoids and lipids. D1 provides most of the ligands for the Mn4-Ca-O5 cluster of the oxygen-evolving complex (OEC). There is also a Cl(-1) ion associated with D1 and D2, which is required for oxygen evolution. The PSII complex binds additional chlorophylls, carotenoids and specific lipids. as a cofactor. In terms of processing, tyr-161 forms a radical intermediate that is referred to as redox-active TyrZ, YZ or Y-Z. Post-translationally, C-terminally processed by CTPA; processing is essential to allow assembly of the oxygen-evolving complex and thus photosynthetic growth.

The protein localises to the plastid membrane. It carries out the reaction 2 a plastoquinone + 4 hnu + 2 H2O = 2 a plastoquinol + O2. Its function is as follows. Photosystem II (PSII) is a light-driven water:plastoquinone oxidoreductase that uses light energy to abstract electrons from H(2)O, generating O(2) and a proton gradient subsequently used for ATP formation. It consists of a core antenna complex that captures photons, and an electron transfer chain that converts photonic excitation into a charge separation. The D1/D2 (PsbA/PsbD) reaction center heterodimer binds P680, the primary electron donor of PSII as well as several subsequent electron acceptors. The polypeptide is Photosystem II protein D1 (Cuscuta exaltata (Tall dodder)).